The primary structure comprises 271 residues: Phosphonoacetaldehyde hydrolase (271 aa).

The Nucleophile role is filled by aspartate 12. Residues aspartate 12 and alanine 14 each contribute to the Mg(2+) site. Residue lysine 54 is the Schiff-base intermediate with substrate of the active site. A Mg(2+)-binding site is contributed by aspartate 188.

It belongs to the HAD-like hydrolase superfamily. PhnX family. In terms of assembly, homodimer. Mg(2+) is required as a cofactor.

It catalyses the reaction phosphonoacetaldehyde + H2O = acetaldehyde + phosphate + H(+). In terms of biological role, involved in phosphonate degradation. The sequence is that of Phosphonoacetaldehyde hydrolase from Aliivibrio salmonicida (strain LFI1238) (Vibrio salmonicida (strain LFI1238)).